The primary structure comprises 479 residues: Lincomycin resistance protein LmrB (479 aa).

The next 14 membrane-spanning stretches (helical) occupy residues 19–41 (MISL…IALT), 56–78 (WLTT…LLQW), 85–107 (FTVS…SFSF), 112–134 (RIVQ…LVIF), 141–160 (AAMG…GPTF), 170–192 (WHWI…IAYM), 205–222 (VLSI…VFGF), 232–251 (WSSP…LILF), 272–294 (MFIL…MLLL), 304–326 (LTAF…MSPV), 338–355 (WLVI…WFFS), 360–382 (TSTA…MIMM), 403–425 (IMNT…IMAA), and 449–471 (AGVQ…GAFF).

The protein belongs to the major facilitator superfamily. EmrB family.

It localises to the cell membrane. Functionally, proton-dependent transporter. May mediate the efflux of lincomycin. The sequence is that of Lincomycin resistance protein LmrB (lmrB) from Bacillus subtilis (strain 168).